We begin with the raw amino-acid sequence, 341 residues long: Basic membrane protein B (341 aa).

The N-terminal stretch at 1 to 14 is a signal peptide; that stretch reads MRIVIFIFGILLTS. Residue Cys15 is the site of N-palmitoyl cysteine attachment. Cys15 carries S-diacylglycerol cysteine lipidation.

This sequence belongs to the BMP lipoprotein family. Monomer.

It is found in the cell inner membrane. Functionally, may be part of an ABC-type nucleoside uptake system involved in the purine salvage pathway. The sequence is that of Basic membrane protein B (bmpB) from Borreliella burgdorferi (strain ATCC 35210 / DSM 4680 / CIP 102532 / B31) (Borrelia burgdorferi).